The primary structure comprises 272 residues: Protein HemX (272 aa).

8 helical membrane-spanning segments follow: residues isoleucine 7–leucine 27, phenylalanine 38–methionine 58, isoleucine 65–isoleucine 85, leucine 93–proline 113, leucine 135–leucine 155, leucine 188–leucine 208, phenylalanine 212–leucine 232, and tryptophan 248–phenylalanine 268.

Its subcellular location is the cell membrane. Required for HemL synthesis. This is Protein HemX (hemX) from Brevibacillus brevis (Bacillus brevis).